Reading from the N-terminus, the 701-residue chain is Glycine--tRNA ligase beta subunit (701 aa).

Belongs to the class-II aminoacyl-tRNA synthetase family. Tetramer of two alpha and two beta subunits.

It is found in the cytoplasm. It carries out the reaction tRNA(Gly) + glycine + ATP = glycyl-tRNA(Gly) + AMP + diphosphate. The sequence is that of Glycine--tRNA ligase beta subunit from Nitratidesulfovibrio vulgaris (strain DSM 19637 / Miyazaki F) (Desulfovibrio vulgaris).